A 491-amino-acid polypeptide reads, in one-letter code: 4,4'-diapolycopen-4-al dehydrogenase (491 aa).

Residue E208 is part of the active site.

The protein belongs to the carotenoid/retinoid oxidoreductase family. CrtN subfamily.

It carries out the reaction all-trans-4,4'-diapolycopen-4-al + A + H2O = all-trans-4,4'-diapolycopen-4-oate + AH2 + H(+). It functions in the pathway carotenoid biosynthesis. In terms of biological role, involved in the biosynthesis of the major C30 carotenoid methyl 4'-[6-O-(acylglycosyl)oxy]-4,4'-diapolycopen-4-oic acid via 4,4'-diapolycopen-4-oic acid intermediate. Catalyzes the oxidation of 4,4'-diapolycopen-4-al to yield 4,4'-diapolycopen-4-oic acid. The chain is 4,4'-diapolycopen-4-al dehydrogenase from Metabacillus indicus (Bacillus indicus).